Reading from the N-terminus, the 142-residue chain is Baculoviral IAP repeat-containing protein 5 (142 aa).

One copy of the BIR repeat lies at 18-88 (RISTFKNWPF…KHSSGCAFLS (71 aa)). The residue at position 20 (Ser-20) is a Phosphoserine; by AURKC. N6-acetyllysine is present on Lys-23. Thr-34 carries the post-translational modification Phosphothreonine; by CDK1 and CDK15. Thr-48 carries the phosphothreonine modification. Positions 57, 60, 77, and 84 each coordinate Zn(2+). N6-acetyllysine is present on residues Lys-90, Lys-110, Lys-112, and Lys-115. A Phosphothreonine; by AURKB modification is found at Thr-117. Lys-129 carries the N6-acetyllysine modification.

Belongs to the IAP family. Monomer or homodimer. Exists as a homodimer in the apo state and as a monomer in the CPC-bound state. The monomer protects cells against apoptosis more efficiently than the dimer. Only the dimeric form is capable of enhancing tubulin stability in cells. When phosphorylated, interacts with LAMTOR5/HBXIP; the resulting complex binds pro-CASP9, as well as active CASP9, but much less efficiently. Component of the chromosomal passenger complex (CPC) composed of at least BIRC5/survivin, CDCA8/borealin, INCENP, AURKB or AURKC; in the complex forms a triple-helix bundle-based subcomplex with INCENP and CDCA8. Interacts with JTB. Interacts (via BIR domain) with histone H3 phosphorylated at 'Thr-3' (H3pT3). Interacts with EVI5. Interacts with GTP-bound RAN in both the S and M phases of the cell cycle. Interacts with USP9X. Interacts with tubulin. Interacts with BIRC2/c-IAP1. The acetylated form at Lys-129 interacts with STAT3. The monomeric form deacetylated at Lys-129 interacts with XPO1/CRM1. The monomeric form interacts with XIAP/BIRC4. Both the dimeric and monomeric form can interact with DIABLO/SMAC. Interacts with BIRC6/bruce. Interacts with FBXL7; this interaction facilitates the polyubiquitination and subsequent proteasomal degradation of BIRC5 by the SCF(FBXL7) E3 ubiquitin-protein ligase complex. Ubiquitinated by the Cul9-RING ubiquitin-protein ligase complex, leading to its degradation. Ubiquitination is required for centrosomal targeting. Deubiquitinated by USP35 or USP38; leading to stabilization. In terms of processing, acetylation at Lys-129 results in its homodimerization, while deacetylation promotes the formation of monomers which heterodimerize with XPO1/CRM1 which facilitates its nuclear export. The acetylated form represses STAT3 transactivation. The dynamic equilibrium between its acetylation and deacetylation at Lys-129 determines its interaction with XPO1/CRM1, its subsequent subcellular localization, and its ability to inhibit STAT3 transactivation. Post-translationally, in vitro phosphorylation at Thr-117 by AURKB prevents interaction with INCENP and localization to mitotic chromosomes. Phosphorylation at Thr-48 by CK2 is critical for its mitotic and anti-apoptotic activities. Phosphorylation at Thr-34 by CDK15 is critical for its anti-apoptotic activity. Phosphorylation at Ser-20 by AURKC is critical for regulation of proper chromosome alignment and segregation, and possibly cytokinesis.

It localises to the cytoplasm. It is found in the nucleus. Its subcellular location is the chromosome. The protein localises to the centromere. The protein resides in the cytoskeleton. It localises to the spindle. It is found in the kinetochore. Its subcellular location is the midbody. Multitasking protein that has dual roles in promoting cell proliferation and preventing apoptosis. Component of a chromosome passage protein complex (CPC) which is essential for chromosome alignment and segregation during mitosis and cytokinesis. Acts as an important regulator of the localization of this complex; directs CPC movement to different locations from the inner centromere during prometaphase to midbody during cytokinesis and participates in the organization of the center spindle by associating with polymerized microtubules. Involved in the recruitment of CPC to centromeres during early mitosis via association with histone H3 phosphorylated at 'Thr-3' (H3pT3) during mitosis. The complex with RAN plays a role in mitotic spindle formation by serving as a physical scaffold to help deliver the RAN effector molecule TPX2 to microtubules. May counteract a default induction of apoptosis in G2/M phase. The acetylated form represses STAT3 transactivation of target gene promoters. May play a role in neoplasia. Inhibitor of CASP3 and CASP7. Essential for the maintenance of mitochondrial integrity and function. The protein is Baculoviral IAP repeat-containing protein 5 (BIRC5) of Sus scrofa (Pig).